Consider the following 600-residue polypeptide: Elongation factor 4 (600 aa).

A tr-type G domain is found at 5 to 187 (KYIRNFSIIA…AIVNKLPPPK (183 aa)). GTP contacts are provided by residues 17-22 (DHGKST) and 134-137 (NKID).

It belongs to the TRAFAC class translation factor GTPase superfamily. Classic translation factor GTPase family. LepA subfamily.

It is found in the cell inner membrane. It catalyses the reaction GTP + H2O = GDP + phosphate + H(+). In terms of biological role, required for accurate and efficient protein synthesis under certain stress conditions. May act as a fidelity factor of the translation reaction, by catalyzing a one-codon backward translocation of tRNAs on improperly translocated ribosomes. Back-translocation proceeds from a post-translocation (POST) complex to a pre-translocation (PRE) complex, thus giving elongation factor G a second chance to translocate the tRNAs correctly. Binds to ribosomes in a GTP-dependent manner. The sequence is that of Elongation factor 4 from Rickettsia bellii (strain OSU 85-389).